The chain runs to 93 residues: Large ribosomal subunit protein bL27 (93 aa).

Residues 1–8 (MIMDLQFF) constitute a propeptide that is removed on maturation. A disordered region spans residues 8–29 (FSHHKGGGSTANGRNSAGRRLG).

The protein belongs to the bacterial ribosomal protein bL27 family. In terms of processing, the N-terminus is cleaved by ribosomal processing cysteine protease Prp.

In Limosilactobacillus reuteri (strain DSM 20016) (Lactobacillus reuteri), this protein is Large ribosomal subunit protein bL27.